The chain runs to 60 residues: Large ribosomal subunit protein bL32 (60 aa).

Residues 1 to 20 show a composition bias toward basic residues; the sequence is MAKPARHTSKAKRNKRRTHY. The interval 1-22 is disordered; sequence MAKPARHTSKAKRNKRRTHYKL.

It belongs to the bacterial ribosomal protein bL32 family.

This Streptococcus agalactiae serotype V (strain ATCC BAA-611 / 2603 V/R) protein is Large ribosomal subunit protein bL32.